The chain runs to 174 residues: Chaperonin-like RBCX protein 1, chloroplastic (174 aa).

A chloroplast-targeting transit peptide spans 1 to 45 (MESSSSLLHHSYLSYLNPKFGKRPLVSYPLMQSSRKCKQTRICSN).

It belongs to the RbcX family. As to quaternary structure, homodimer. Interacts with rbcL, atpB and THI1.

It is found in the plastid. It localises to the chloroplast. Its function is as follows. Chaperone involved in RuBisCO assembly process. This is Chaperonin-like RBCX protein 1, chloroplastic from Arabidopsis thaliana (Mouse-ear cress).